The sequence spans 1033 residues: Isoleucine--tRNA ligase 2 (1033 aa).

The 'HIGH' region signature appears at 47 to 57; sequence PTANGLPHVGH. Residues 590–594 carry the 'KMSKS' region motif; sequence KMSKS. ATP is bound at residue Lys-593.

The protein belongs to the class-I aminoacyl-tRNA synthetase family. IleS type 2 subfamily. Monomer. Zn(2+) is required as a cofactor.

Its subcellular location is the cytoplasm. It carries out the reaction tRNA(Ile) + L-isoleucine + ATP = L-isoleucyl-tRNA(Ile) + AMP + diphosphate. Catalyzes the attachment of isoleucine to tRNA(Ile). As IleRS can inadvertently accommodate and process structurally similar amino acids such as valine, to avoid such errors it has two additional distinct tRNA(Ile)-dependent editing activities. One activity is designated as 'pretransfer' editing and involves the hydrolysis of activated Val-AMP. The other activity is designated 'posttransfer' editing and involves deacylation of mischarged Val-tRNA(Ile). This chain is Isoleucine--tRNA ligase 2, found in Bacillus thuringiensis subsp. konkukian (strain 97-27).